The sequence spans 122 residues: Glucagon-2 (122 aa).

Positions 1-21 (MTSLHSLAGLLLLMIIQSSWQ) are cleaved as a signal peptide. Propeptides lie at residues 83–86 (NGLF) and Glu122.

The protein belongs to the glucagon family.

The protein resides in the secreted. Promotes hydrolysis of glycogen and lipids, and raises the blood sugar level. This Lophius americanus (American angler) protein is Glucagon-2 (gcg2).